Consider the following 564-residue polypeptide: Dihydroxy-acid dehydratase (564 aa).

Cys53 serves as a coordination point for [2Fe-2S] cluster. Position 85 (Asp85) interacts with Mg(2+). Cys126 is a [2Fe-2S] cluster binding site. The Mg(2+) site is built by Asp127 and Lys128. Residue Lys128 is modified to N6-carboxylysine. Cys203 is a [2Fe-2S] cluster binding site. Mg(2+) is bound at residue Glu454. Ser480 serves as the catalytic Proton acceptor.

The protein belongs to the IlvD/Edd family. As to quaternary structure, homodimer. Requires [2Fe-2S] cluster as cofactor. Mg(2+) serves as cofactor.

It carries out the reaction (2R)-2,3-dihydroxy-3-methylbutanoate = 3-methyl-2-oxobutanoate + H2O. It catalyses the reaction (2R,3R)-2,3-dihydroxy-3-methylpentanoate = (S)-3-methyl-2-oxopentanoate + H2O. It participates in amino-acid biosynthesis; L-isoleucine biosynthesis; L-isoleucine from 2-oxobutanoate: step 3/4. The protein operates within amino-acid biosynthesis; L-valine biosynthesis; L-valine from pyruvate: step 3/4. Functionally, functions in the biosynthesis of branched-chain amino acids. Catalyzes the dehydration of (2R,3R)-2,3-dihydroxy-3-methylpentanoate (2,3-dihydroxy-3-methylvalerate) into 2-oxo-3-methylpentanoate (2-oxo-3-methylvalerate) and of (2R)-2,3-dihydroxy-3-methylbutanoate (2,3-dihydroxyisovalerate) into 2-oxo-3-methylbutanoate (2-oxoisovalerate), the penultimate precursor to L-isoleucine and L-valine, respectively. The polypeptide is Dihydroxy-acid dehydratase (Mycobacterium ulcerans (strain Agy99)).